Reading from the N-terminus, the 228-residue chain is Octanoyltransferase (228 aa).

In terms of domain architecture, BPL/LPL catalytic spans 31 to 212; that stretch reads GETDGILILL…KFSEVFGIHF (182 aa). Residues 76–83, 143–145, and 156–158 each bind substrate; these read RGGKITFH, AIG, and GIA. Cysteine 174 (acyl-thioester intermediate) is an active-site residue.

This sequence belongs to the LipB family.

It is found in the cytoplasm. It carries out the reaction octanoyl-[ACP] + L-lysyl-[protein] = N(6)-octanoyl-L-lysyl-[protein] + holo-[ACP] + H(+). The protein operates within protein modification; protein lipoylation via endogenous pathway; protein N(6)-(lipoyl)lysine from octanoyl-[acyl-carrier-protein]: step 1/2. In terms of biological role, catalyzes the transfer of endogenously produced octanoic acid from octanoyl-acyl-carrier-protein onto the lipoyl domains of lipoate-dependent enzymes. Lipoyl-ACP can also act as a substrate although octanoyl-ACP is likely to be the physiological substrate. This Thermoanaerobacter pseudethanolicus (strain ATCC 33223 / 39E) (Clostridium thermohydrosulfuricum) protein is Octanoyltransferase.